The following is a 135-amino-acid chain: Large ribosomal subunit protein uL16c (135 aa).

Belongs to the universal ribosomal protein uL16 family. As to quaternary structure, part of the 50S ribosomal subunit.

The protein resides in the plastid. It localises to the chloroplast. The sequence is that of Large ribosomal subunit protein uL16c from Stigeoclonium helveticum (Green alga).